Reading from the N-terminus, the 314-residue chain is BCL2/adenovirus E1B 19 kDa protein-interacting protein 2 (314 aa).

Residues 1 to 21 (MEGVELKEEWQDEDFPIPLPE) are disordered. Residues 10-21 (WQDEDFPIPLPE) are compositionally biased toward acidic residues. 2 positions are modified to phosphoserine: serine 41 and serine 77. The interval 76 to 100 (ESGEIDLDGLDTPSENSNEFEWEDD) is disordered. Residue threonine 87 is modified to Phosphothreonine. A phosphoserine mark is found at serine 89, serine 92, and serine 114. Residues 147–304 (IEPYKKVISH…CIKQVDQELN (158 aa)) form the CRAL-TRIO domain.

It is found in the cytoplasm. It localises to the perinuclear region. Its function is as follows. Implicated in the suppression of cell death. Interacts with the BCL-2 and adenovirus E1B 19 kDa proteins. The protein is BCL2/adenovirus E1B 19 kDa protein-interacting protein 2 (BNIP2) of Homo sapiens (Human).